Consider the following 610-residue polypeptide: Elongation factor 4 (610 aa).

Residues 11 to 193 (EKIRNFSIIA…QIVEKVPAPT (183 aa)) form the tr-type G domain. GTP contacts are provided by residues 23 to 28 (DHGKST) and 140 to 143 (NKID).

Belongs to the TRAFAC class translation factor GTPase superfamily. Classic translation factor GTPase family. LepA subfamily.

The protein localises to the cell membrane. The catalysed reaction is GTP + H2O = GDP + phosphate + H(+). Required for accurate and efficient protein synthesis under certain stress conditions. May act as a fidelity factor of the translation reaction, by catalyzing a one-codon backward translocation of tRNAs on improperly translocated ribosomes. Back-translocation proceeds from a post-translocation (POST) complex to a pre-translocation (PRE) complex, thus giving elongation factor G a second chance to translocate the tRNAs correctly. Binds to ribosomes in a GTP-dependent manner. The polypeptide is Elongation factor 4 (Streptococcus pyogenes serotype M12 (strain MGAS9429)).